The following is a 571-amino-acid chain: Proline--tRNA ligase (571 aa).

Belongs to the class-II aminoacyl-tRNA synthetase family. ProS type 1 subfamily. In terms of assembly, homodimer.

The protein localises to the cytoplasm. The catalysed reaction is tRNA(Pro) + L-proline + ATP = L-prolyl-tRNA(Pro) + AMP + diphosphate. Functionally, catalyzes the attachment of proline to tRNA(Pro) in a two-step reaction: proline is first activated by ATP to form Pro-AMP and then transferred to the acceptor end of tRNA(Pro). As ProRS can inadvertently accommodate and process non-cognate amino acids such as alanine and cysteine, to avoid such errors it has two additional distinct editing activities against alanine. One activity is designated as 'pretransfer' editing and involves the tRNA(Pro)-independent hydrolysis of activated Ala-AMP. The other activity is designated 'posttransfer' editing and involves deacylation of mischarged Ala-tRNA(Pro). The misacylated Cys-tRNA(Pro) is not edited by ProRS. The protein is Proline--tRNA ligase of Pseudomonas putida (strain ATCC 700007 / DSM 6899 / JCM 31910 / BCRC 17059 / LMG 24140 / F1).